The sequence spans 184 residues: Ribosome-recycling factor (184 aa).

It belongs to the RRF family.

It is found in the cytoplasm. Its function is as follows. Responsible for the release of ribosomes from messenger RNA at the termination of protein biosynthesis. May increase the efficiency of translation by recycling ribosomes from one round of translation to another. This Mycoplasma pneumoniae (strain ATCC 29342 / M129 / Subtype 1) (Mycoplasmoides pneumoniae) protein is Ribosome-recycling factor.